Reading from the N-terminus, the 299-residue chain is UPF0276 protein ABO_1518 (299 aa).

It belongs to the UPF0276 family.

In Alcanivorax borkumensis (strain ATCC 700651 / DSM 11573 / NCIMB 13689 / SK2), this protein is UPF0276 protein ABO_1518.